A 508-amino-acid polypeptide reads, in one-letter code: Maturase K (508 aa).

It belongs to the intron maturase 2 family. MatK subfamily.

The protein resides in the plastid. It is found in the chloroplast. Functionally, usually encoded in the trnK tRNA gene intron. Probably assists in splicing its own and other chloroplast group II introns. The protein is Maturase K of Abies bracteata (Bristle-cone fir).